The following is a 169-amino-acid chain: Ferric-chelate reductase (NAD(P)H) (169 aa).

Tyrosine 7 contacts NADP(+). FMN contacts are provided by residues 27–31, 45–52, 82–84, and lysine 89; these read QIANT, CLNKENDT, and RKS. Residues histidine 126 and 147 to 154 contribute to the NADP(+) site; that span reads YADYHLMK.

The protein belongs to the non-flavoprotein flavin reductase family. In terms of assembly, homodimer. The cofactor is FMN. FAD serves as cofactor.

The enzyme catalyses 2 a Fe(II)-siderophore + NAD(+) + H(+) = 2 a Fe(III)-siderophore + NADH. It catalyses the reaction 2 a Fe(II)-siderophore + NADP(+) + H(+) = 2 a Fe(III)-siderophore + NADPH. In terms of biological role, catalyzes the reduction of bound ferric iron (Fe(3+)) in a variety of iron chelators (siderophores) using NAD(P)H as the electron donor, resulting in the release of Fe(2+). Not active with uncomplexed Fe(3+). Also reduces FMN and FAD, but not riboflavin. The sequence is that of Ferric-chelate reductase (NAD(P)H) from Archaeoglobus fulgidus (strain ATCC 49558 / DSM 4304 / JCM 9628 / NBRC 100126 / VC-16).